We begin with the raw amino-acid sequence, 75 residues long: UPF0352 protein YejL (75 aa).

Belongs to the UPF0352 family.

The chain is UPF0352 protein YejL from Shigella flexneri.